Consider the following 346-residue polypeptide: Peroxidase 38 (346 aa).

Positions M1 to A22 are cleaved as a signal peptide. Residue Q23 is modified to Pyrrolidone carboxylic acid. Disulfide bonds link C33-C113, C66-C71, C119-C323, and C199-C231. H64 acts as the Proton acceptor in catalysis. Ca(2+) is bound by residues D65, V68, G70, D72, and S74. N79 is a glycosylation site (N-linked (GlcNAc...) asparagine). A substrate-binding site is contributed by P161. H192 is a binding site for heme b. Residue T193 coordinates Ca(2+). Residue N236 is glycosylated (N-linked (GlcNAc...) asparagine). Positions 244, 247, and 252 each coordinate Ca(2+).

This sequence belongs to the peroxidase family. Classical plant (class III) peroxidase subfamily. The cofactor is heme b. It depends on Ca(2+) as a cofactor.

Its subcellular location is the secreted. The protein resides in the vacuole. It carries out the reaction 2 a phenolic donor + H2O2 = 2 a phenolic radical donor + 2 H2O. Functionally, removal of H(2)O(2), oxidation of toxic reductants, biosynthesis and degradation of lignin, suberization, auxin catabolism, response to environmental stresses such as wounding, pathogen attack and oxidative stress. These functions might be dependent on each isozyme/isoform in each plant tissue. In Arabidopsis thaliana (Mouse-ear cress), this protein is Peroxidase 38 (PER38).